A 536-amino-acid polypeptide reads, in one-letter code: MWLRPSIWLCFPLCLALPGQSQPKAADDLGGLYCGPSSFHFSINLLSQDTATPPALVVWDRRGRLHKLQNDSGCGTWVHKGPGSSMGVEASYRGCYVTEWDSHYLMPIGLEEADAGGHRTVTETKLFKCPVDFLALDVPTIGLCDAVPVWDRLPCAPPPITQGECKQLGCCYNSEEVPSCYYGNTVTSRCTQDGHFSIAVSRNVTSPPLLWDSVHLAFRNDSECKPVMETHTFVLFRFPFSSCGTAKRVTGNQAVYENELVAARDVRTWSHGSITRDSIFRLRVSCIYSVSSSALPVNIQVFTLPPPLPETHPGPLTLELQIAKDERYGSYYNASDYPVVKLLREPIYVEVSIRHRTDPSLGLHLHQCWATPGMSPLLQPQWPMLVNGCPYTGDNYQTKLIPVQKASNLLFPSHYQRFSVSTFSFVDSVAKQALKGPVYLHCTASVCKPAGAPICVTTCPAARRRRSSDIHFQNGTASISSKGPMILLQATRDSSERLHKYSRPPVDSHALWVAGLLGSLIIGALLVSYLVFRKWR.

Positions 1–21 are cleaved as a signal peptide; sequence MWLRPSIWLCFPLCLALPGQS. Topologically, residues 22-511 are extracellular; the sequence is QPKAADDLGG…SRPPVDSHAL (490 aa). N-linked (GlcNAc...) asparagine glycosylation is present at Asn-70. In terms of domain architecture, P-type spans 142–184; that stretch reads GLCDAVPVWDRLPCAPPPITQGECKQLGCCYNSEEVPSCYYGN. The ZP domain maps to 189–462; sequence RCTQDGHFSI…PICVTTCPAA (274 aa). 2 N-linked (GlcNAc...) asparagine glycosylation sites follow: Asn-203 and Asn-220. Ser-293 carries an O-linked (GalNAc...) serine glycan. Thr-303 carries an O-linked (GalNAc...) threonine glycan. N-linked (GlcNAc...) asparagine glycosylation is present at Asn-333. A disulfide bridge links Cys-368 with Cys-442. A propeptide spans 463–536 (removed in mature form); sequence RRRRSSDIHF…VSYLVFRKWR (74 aa). N-linked (GlcNAc...) asparagine glycosylation occurs at Asn-474. A helical transmembrane segment spans residues 512-532; it reads WVAGLLGSLIIGALLVSYLVF. Residues 533-536 lie on the Cytoplasmic side of the membrane; sequence RKWR.

The protein belongs to the ZP domain family. ZPB subfamily. In terms of processing, proteolytically cleaved before the transmembrane segment to yield the secreted ectodomain incorporated in the zona pellucida. Post-translationally, disulfide bonds are formed between the cysteines of three consecutive regions: Cys-368 and Cys-389, Cys-442 and Cys-447, Cys-455 and Cys-459. N-glycosylated; contains bi-, tri- and tetra-antennary glycans with N-acetyllactosamine repeats. In terms of processing, O-glycosylated; contains sulfate-substituted glycans. In terms of tissue distribution, expressed in oocytes.

The protein localises to the zona pellucida. The protein resides in the cell membrane. Component of the zona pellucida, an extracellular matrix surrounding oocytes which mediates sperm binding, induction of the acrosome reaction and prevents post-fertilization polyspermy. The zona pellucida is composed of 3 to 4 glycoproteins, ZP1, ZP2, ZP3, and ZP4. ZP4 may act as a sperm receptor. The sequence is that of Zona pellucida sperm-binding protein 4 (ZP4) from Sus scrofa (Pig).